A 334-amino-acid chain; its full sequence is MRLLEFTALSSLLVLFLLLAVSAEQCGKQAGGARCPSGMCCSNFGWCGNTQDYCGPGKCQSQCPSGPGPTPRPPTPTPGPSTGDISNIISSSMFDQMLKHRNDNTCQGKSFYTYNAFITAARSFRGFGTTGDTTRRKREVAAFFAQTSHETTGGWDTAPDGRYAWGYCYLREQGNPPSYCVQSSQWPCAPGQKYYGRGPIQISYNYNYGPCGRAIGQNLLNNPDLVATNAVVSFKSAIWFWMTAQSPKPSCHDVITGRWTPSAADRAANRLPGYGVITNIINGGLECGHGSDARVQDRIGFYRRYCSILGVSPGDNIDCGNQKSFNSGLLLETM.

The first 23 residues, 1-23, serve as a signal peptide directing secretion; the sequence is MRLLEFTALSSLLVLFLLLAVSA. Residues 24–65 enclose the Chitin-binding type-1 domain; it reads EQCGKQAGGARCPSGMCCSNFGWCGNTQDYCGPGKCQSQCPS. 4 disulfides stabilise this stretch: cysteine 26/cysteine 41, cysteine 35/cysteine 47, cysteine 40/cysteine 54, and cysteine 59/cysteine 63. The interval 64–84 is disordered; the sequence is PSGPGPTPRPPTPTPGPSTGD. Pro residues predominate over residues 66–79; the sequence is GPGPTPRPPTPTPG. Proline 73, proline 74, and proline 76 each carry 4-hydroxyproline. Disulfide bonds link cysteine 106–cysteine 168, cysteine 180–cysteine 188, and cysteine 287–cysteine 319. Glutamate 150 serves as the catalytic Proton donor. The propeptide at 328-334 is removed in mature form; sequence GLLLETM.

This sequence belongs to the glycosyl hydrolase 19 family. Chitinase class I subfamily. The 4-hydroxyproline residues are not glycosylated in this plant vacuolar protein.

It is found in the vacuole. It carries out the reaction Random endo-hydrolysis of N-acetyl-beta-D-glucosaminide (1-&gt;4)-beta-linkages in chitin and chitodextrins.. In terms of biological role, defense against chitin-containing fungal pathogens. The polypeptide is Endochitinase 3 (CHN14) (Nicotiana tabacum (Common tobacco)).